The following is a 397-amino-acid chain: Elongation factor Tu (397 aa).

The 198-residue stretch at 10–207 (KPHCNIGTIG…AVDEWIPQPE (198 aa)) folds into the tr-type G domain. The segment at 19–26 (GHVDHGKT) is G1. Residue 19–26 (GHVDHGKT) participates in GTP binding. Threonine 26 contributes to the Mg(2+) binding site. Positions 61–65 (GITIS) are G2. The tract at residues 82 to 85 (DCPG) is G3. GTP is bound by residues 82–86 (DCPGH) and 137–140 (NKVD). Residues 137–140 (NKVD) form a G4 region. Positions 175 to 177 (SAL) are G5.

The protein belongs to the TRAFAC class translation factor GTPase superfamily. Classic translation factor GTPase family. EF-Tu/EF-1A subfamily. Monomer.

The protein localises to the cytoplasm. The catalysed reaction is GTP + H2O = GDP + phosphate + H(+). In terms of biological role, GTP hydrolase that promotes the GTP-dependent binding of aminoacyl-tRNA to the A-site of ribosomes during protein biosynthesis. This Sphingopyxis alaskensis (strain DSM 13593 / LMG 18877 / RB2256) (Sphingomonas alaskensis) protein is Elongation factor Tu.